Reading from the N-terminus, the 326-residue chain is Heterodimeric geranylgeranyl pyrophosphate synthase small subunit, chloroplastic (326 aa).

The N-terminal 33 residues, 1-33 (MLFSGSAIPLSSFCSLPEKPHTLPMKLSPAAIR), are a transit peptide targeting the chloroplast. Lys-88 and His-120 together coordinate isopentenyl diphosphate. Mg(2+) is bound by residues Asp-127 and Asp-133. Arg-138 is a binding site for dimethylallyl diphosphate. Arg-139 is a binding site for isopentenyl diphosphate. Dimethylallyl diphosphate-binding residues include Lys-220 and Gln-258. A coiled-coil region spans residues 274 to 301 (GAEKGMMEMAEELKEKAKKELQVFDNKY).

The protein belongs to the FPP/GGPP synthase family. As to quaternary structure, part of a heterodimeric geranyl(geranyl)diphosphate synthase. Interacts with GGPPS1 or GGPPS2, but not with GGPPS9. Interacts with LIL3.1 and LIL3.2. The cofactor is Mg(2+). As to expression, expressed ubiquitously.

The protein resides in the plastid. Its subcellular location is the chloroplast thylakoid membrane. Its function is as follows. Heterodimeric geranyl(geranyl)-diphosphate (GPP) synthase small subunit. The small subunit alone is inactive in vitro while the large subunit GGPPS1 catalyzes mainly the production of geranygeranyl-diphosphate in vitro. Upon association of the two subunits, the product profile changes and the production of gerany-diphosphate is strongly increased. The sequence is that of Heterodimeric geranylgeranyl pyrophosphate synthase small subunit, chloroplastic (GGR) from Arabidopsis thaliana (Mouse-ear cress).